Reading from the N-terminus, the 107-residue chain is Acetyl-CoA acetyltransferase (107 aa).

The active-site Acyl-thioester intermediate is the Cys88.

The protein belongs to the thiolase-like superfamily. Thiolase family. In terms of assembly, homotetramer.

Its subcellular location is the cytoplasm. The catalysed reaction is 2 acetyl-CoA = acetoacetyl-CoA + CoA. Catalyzes the condensation of two molecules of acetyl-CoA to produce acetoacetyl-CoA. This Clostridioides difficile (Peptoclostridium difficile) protein is Acetyl-CoA acetyltransferase (thi).